A 103-amino-acid polypeptide reads, in one-letter code: Large ribosomal subunit protein bL21 (103 aa).

Belongs to the bacterial ribosomal protein bL21 family. Part of the 50S ribosomal subunit. Contacts protein L20.

Its function is as follows. This protein binds to 23S rRNA in the presence of protein L20. This is Large ribosomal subunit protein bL21 from Ruthia magnifica subsp. Calyptogena magnifica.